A 416-amino-acid chain; its full sequence is Kelch repeat-containing protein At1g19460 (416 aa).

A compositionally biased stretch (polar residues) spans 1–11; that stretch reads MANISEISGDS. The interval 1 to 55 is disordered; sequence MANISEISGDSNDGGDPNKKPEEQVLRRSRRIATRNENQNKKPKEEEEKDNRSVS. Composition is skewed to basic and acidic residues over residues 16-26 and 38-52; these read DPNKKPEEQVL and NQNKKPKEEEEKDNR. 4 Kelch repeats span residues 156–202, 203–250, 255–293, and 294–344; these read EMYV…VFDG, KIYV…FAHA, KLYILGSRCLIYEPKRNGEWDATVNANPIWNLWKVPCTM, and QCVI…SDGS.

This is Kelch repeat-containing protein At1g19460 from Arabidopsis thaliana (Mouse-ear cress).